The primary structure comprises 109 residues: UPF0060 membrane protein HEAR0108 (109 aa).

Transmembrane regions (helical) follow at residues 7-27 (VALF…PYLW), 33-53 (SIWL…LLSL), 63-83 (AAYG…VDGI), and 87-107 (NWDV…MFAP).

It belongs to the UPF0060 family.

The protein resides in the cell inner membrane. This is UPF0060 membrane protein HEAR0108 from Herminiimonas arsenicoxydans.